We begin with the raw amino-acid sequence, 982 residues long: MVFLKRFRAYGFKSYADEITIDFTHSMTGIVGPNGSGKSNVVDALKWVLGERSMKHLRSKSGDDMIFFGSKDKPASKLAEIELTFDNSNRLLHDSRKEISVMRRVYRGSGQSEYFINSNPATLKEISGIFADIGLEKGSLGIISQGSVSWFVEAKPEERRKIFEDASGIGRYTKRKEEVVNQLNRTLINLKQVSVVLNELKKDLKKLTLQAEKAQQFIRVKNELKELELAVLVGEYLQAQTELDKFNFQINSSEHDFKIHEPQLELLEEQIVIFNSRFHSADMQSNELQKELQDIYQKINELEQRKVIIDVQLRQGFSQKDEKQKAAALKKLILVDQTQLDGFENQLSNSKTTITDLEKLINEQKSLVDQIKLQIEKNTADLIYQRSLKTIIELQTNELKKTNNANILVKNANALTGILNTLGTFLKFDKQYEKAILKALGKSIGYLVVNNNNAAIQAIDFLVKNEIGKVTFLPLDDVASDTKITNEHMEILKQLDGFLGVCSDHVKCDPLFQPVVNTLLAQVIIAKDLNSAINLSNYTYKLYRIVTLDGETVYAGGIINGGFEKTNLSDGYLSSASLDNEQNINKLENNERELKKELTELEVKLDEMNRKLKYEELLQAKFIERIVQIKKIILELKMEYEQLTNTTFDGKKAVASEAELIHSLNSAWAKRDEINSKLKLNQELKLQLAKTIKQSEEKIVDLRALLDEQRAKLVSAREGKIRFENTIQNITEKINSVYKMTMEFAIANHNKPVKLSSMQAHNKIAKLQNQLNEMGVINMESIAEISEKQKRFDDINAEYESAQQAVENLQKAITEIDEIASNEFDQLIQKLNQELPKTFKYLFGGGSCQIRYTDPSNVLVSGIDVFANPPGKNIANLMLLSGGEKTLVALSVLFSILKVSAFPLVILDEAESALDPANVERFANIIKTASKNTQFLIITHRQGTMMKCDMLLGAAMQTKGVTKTFAVELENAEKYVSENDSN.

33–40 (PNGSGKSN) contacts ATP. Coiled coils occupy residues 171–231 (RYTK…ELAV), 280–310 (SADMQSNELQKELQDIYQKINELEQRKVIID), and 337–377 (QTQL…QIEK). The SMC hinge domain occupies 416 to 535 (TGILNTLGTF…AKDLNSAINL (120 aa)). Coiled-coil stretches lie at residues 575 to 718 (SASL…SARE) and 753 to 822 (VKLS…IASN).

It belongs to the SMC family. As to quaternary structure, homodimer.

The protein resides in the cytoplasm. Functionally, required for chromosome condensation and partitioning. The chain is Chromosome partition protein Smc from Mycoplasma genitalium (strain ATCC 33530 / DSM 19775 / NCTC 10195 / G37) (Mycoplasmoides genitalium).